Consider the following 770-residue polypeptide: ARF GTPase-activating protein GIT1 (770 aa).

The region spanning 1 to 124 (MSRKGPRAEV…AFVHKLPCRD (124 aa)) is the Arf-GAP domain. Positions 1-124 (MSRKGPRAEV…AFVHKLPCRD (124 aa)) are interaction with gamma-tubulin and localization to the centrosome. The C4-type zinc finger occupies 11-34 (CADCSAPDPGWASISRGVLVCDEC). ANK repeat units lie at residues 132–161 (DLSK…QANF), 166–195 (KGTT…DPGS), and 199–228 (NGRT…ELTD). At tyrosine 224 the chain carries Phosphotyrosine. Residues 245–374 (HYIIPQMADR…QGKSLSSPTD (130 aa)) are interaction with PCLO. Residues 253–424 (DRSRQKCMSQ…NRARSMDSSD (172 aa)) form an interaction with PTK2/FAK1 region. The interaction with ARHGEF7 stretch occupies residues 254–376 (RSRQKCMSQS…KSLSSPTDNL (123 aa)). The disordered stretch occupies residues 363-425 (RQQGKSLSSP…RARSMDSSDL (63 aa)). Polar residues predominate over residues 366 to 383 (GKSLSSPTDNLELSARSQ). A phosphoserine mark is found at serine 368 and serine 371. Position 373 is a phosphothreonine (threonine 373). The segment at 375–596 (NLELSARSQS…QEGSRHASKL (222 aa)) is interaction with NCK2 and GRIN3A. The required for localization at synapses stretch occupies residues 375–596 (NLELSARSQS…QEGSRHASKL (222 aa)). A phosphoserine mark is found at serine 379 and serine 384. Tyrosine 392 bears the Phosphotyrosine mark. Serine 394 and serine 397 each carry phosphoserine. A compositionally biased stretch (acidic residues) spans 394-403 (SVASDEDTDQ). Threonine 401 carries the post-translational modification Phosphothreonine. Serine 419, serine 422, and serine 426 each carry phosphoserine. Residues 420–475 (MDSSDLSDGAVTLQEYLELKKALATSEAKVQQLMKVNSSLSDELRRLQREIHKLQA) form an interaction with MAPK1 region. The interaction with IKBKG stretch occupies residues 429–629 (AVTLQEYLEL…EGKRFLELSK (201 aa)). Positions 449-483 (VQQLMKVNSSLSDELRRLQREIHKLQAENLQLRQP) form a coiled coil. A phosphoserine mark is found at serine 507 and serine 545. The residue at position 546 (threonine 546) is a Phosphothreonine. 2 positions are modified to phosphotyrosine: tyrosine 554 and tyrosine 563. Residues serine 570, serine 580, serine 601, and serine 605 each carry the phosphoserine modification. Positions 578-588 (PSSPLLSCSQE) are enriched in polar residues. The tract at residues 578 to 615 (PSSPLLSCSQEGSRHASKLSRHGSGADSDYENTQSGDP) is disordered. Residue threonine 610 is modified to Phosphothreonine. At serine 639 the chain carries Phosphoserine. The interval 646 to 770 (PGLPSTEDVI…VTITTREKKQ (125 aa)) is interaction with PXN and TGFB1I1.

In terms of assembly, forms homodimers and possibly oligomers. May forms heterooligomers with GIT2. Interacts with G protein-coupled receptor kinases, including GRK2, GRK3, GRK5 and GRK6. Interacts with PPFIA1, PPFIA2 and PPFIA4. Interacts with GRIP1 and forms a ternary complex with PPFIA1 and GRIP1. Directly interacts with ARHGEF7/beta-PIX, forming in vitro a heptameric complex made of a GIT1 dimer and an ARHGEF7 trimer. Directly interacts with PXN/paxillin; this interaction is enhanced in the presence of ARHGEF7. Directly interacts (via C-terminus) with TGFB1I1/Hic-5 (via LD motif 3). Directly interacts with PTK2/FAK1. May interact with PTK2B/PYK2; this interaction may be indirect. Interacts with AMPA receptors GRIA2/3. Directly interacts with protein Piccolo/PCLO. Forms a complex with Ephrin-B1/EFNB1 and NCK2/GRB4 (via SH2); this interaction is important for spine morphogenesis and synapse formation. Interaction with NCK2 is transient and depends upon GIT1 phosphorylation at Tyr-392. Interacts with GRIN3A/GluN3A (via C-terminus); this interaction competes with GIT1 interaction with ARHGEF7 and limits synaptic localization of GIT1. Interacts with IKBKG/NEMO in resting bone mesenchymal stem cells, as well as in TNF-stimulated cells; this interaction may increase IKBKG affinity for 'Lys-63'-linked polyubiquitin chains. Interacts with GABA(A) receptors, including GABRB3 and GABRG2. Interacts with SCRIB. Interacts (via N- and C-terminus) with ENTR1/SDCCAG3 (via N-terminus); this interaction is direct. May form a tripartite complex with ENTR1 and PTPN13. Interacts with YWHAZ. Interacts with PAK1. Interacts with PAK3. Directly interacts (via N-terminus) with gamma-tubulin. Interacts with MAPK1 and MAPK3; this interaction is required for MAPK1/3 recruitment to focal adhesions. Post-translationally, phosphorylated on tyrosine residues by PTK2/FAK1 and SRC in growing fibroblasts. Phosphorylation at Tyr-392 is induced by activation of Ephrin-B1/EFNB1 and catalyzed by SRC family kinases. It is required for the interaction with NCK2 and for GIT1 recruitment to synapses in hippocampal neurons. In terms of tissue distribution, expressed in the brain (at protein level). Also expressed at high levels in lung and heart. In lung, expressed in endothelial cells, especially in capillaries; also expressed in smooth muscle and epithelial cells of bronchi (at protein level). Expressed in bone marrow mesenchymal stem cells, as well as in osteoclasts and bone marrow-derived macrophages (at protein level).

The protein localises to the cytoplasm. The protein resides in the presynapse. Its subcellular location is the postsynapse. It is found in the postsynaptic density. It localises to the cell junction. The protein localises to the focal adhesion. The protein resides in the cell projection. Its subcellular location is the lamellipodium. It is found in the cytoskeleton. It localises to the microtubule organizing center. The protein localises to the centrosome. The protein resides in the spindle pole. Functionally, GTPase-activating protein for ADP ribosylation factor family members, including ARF1. Multidomain scaffold protein that interacts with numerous proteins and therefore participates in many cellular functions, including receptor internalization, focal adhesion remodeling, and signaling by both G protein-coupled receptors and tyrosine kinase receptors. Through PAK1 activation, positively regulates microtubule nucleation during interphase. Plays a role in the regulation of cytokinesis; for this function, may act in a pathway also involving ENTR1 and PTPN13. May promote cell motility both by regulating focal complex dynamics and by the activation of RAC1. May act as scaffold for MAPK1/3 signal transduction, recruiting MAPK1/3 to focal adhesions after EGF stimulation via a Src-dependent pathway, hence stimulating cell migration. Plays a role in brain development and function. Involved in the regulation of spine density and synaptic plasticity that is required for processes involved in learning. Plays an important role in dendritic spine morphogenesis and synapse formation. In hippocampal neurons, recruits guanine nucleotide exchange factors (GEFs), such as ARHGEF7/beta-PIX, to the synaptic membrane. These in turn locally activate RAC1, which is an essential step for spine morphogenesis and synapse formation. May contribute to the organization of presynaptic active zones through oligomerization and formation of a Piccolo/PCLO-based protein network, which includes ARHGEF7/beta-PIX and FAK1. In neurons, through its interaction with liprin-alpha family members, may be required for AMPA receptor (GRIA2/3) proper targeting to the cell membrane. In complex with GABA(A) receptors and ARHGEF7, plays a crucial role in regulating GABA(A) receptor synaptic stability, maintaining GPHN/gephyrin scaffolds and hence GABAergic inhibitory synaptic transmission, by locally coordinating RAC1 and PAK1 downstream effector activity, leading to F-actin stabilization. May also be important for RAC1 downstream signaling pathway through PAK3 and regulation of neuronal inhibitory transmission at presynaptic input. Required for successful bone regeneration during fracture healing. The function in intramembranous ossification may, at least partly, exerted by macrophages in which GIT1 is a key negative regulator of redox homeostasis, IL1B production, and glycolysis, acting through the ERK1/2/NRF2/NFE2L2 axis. May play a role in angiogenesis during fracture healing. In this process, may regulate activation of the canonical NF-kappa-B signal in bone mesenchymal stem cells by enhancing the interaction between NEMO and 'Lys-63'-ubiquitinated RIPK1/RIP1, eventually leading to enhanced production of VEGFA and others angiogenic factors. Essential for VEGF signaling through the activation of phospholipase C-gamma and ERK1/2, hence may control endothelial cell proliferation and angiogenesis. In Mus musculus (Mouse), this protein is ARF GTPase-activating protein GIT1 (Git1).